Here is a 130-residue protein sequence, read N- to C-terminus: Small ribosomal subunit protein uS8 (130 aa).

It belongs to the universal ribosomal protein uS8 family. Part of the 30S ribosomal subunit. Contacts proteins S5 and S12.

In terms of biological role, one of the primary rRNA binding proteins, it binds directly to 16S rRNA central domain where it helps coordinate assembly of the platform of the 30S subunit. The sequence is that of Small ribosomal subunit protein uS8 from Ectopseudomonas mendocina (strain ymp) (Pseudomonas mendocina).